The following is a 125-amino-acid chain: Homeobox protein HD-8 (125 aa).

Residues E30 to G89 constitute a DNA-binding region (homeobox).

The protein localises to the nucleus. In Encephalitozoon cuniculi (strain GB-M1) (Microsporidian parasite), this protein is Homeobox protein HD-8 (HD-8).